Reading from the N-terminus, the 190-residue chain is Potassium-transporting ATPase KdpC subunit (190 aa).

The chain crosses the membrane as a helical span at residues 10-30; the sequence is TFIFLLLITGGVYPLLTTVLG.

This sequence belongs to the KdpC family. As to quaternary structure, the system is composed of three essential subunits: KdpA, KdpB and KdpC.

It localises to the cell inner membrane. Functionally, part of the high-affinity ATP-driven potassium transport (or Kdp) system, which catalyzes the hydrolysis of ATP coupled with the electrogenic transport of potassium into the cytoplasm. This subunit acts as a catalytic chaperone that increases the ATP-binding affinity of the ATP-hydrolyzing subunit KdpB by the formation of a transient KdpB/KdpC/ATP ternary complex. The protein is Potassium-transporting ATPase KdpC subunit of Escherichia coli (strain K12 / MC4100 / BW2952).